The following is a 937-amino-acid chain: MSDYKNTLNLPETGFPMRGDLAKREPNMLKRWYKDELYQVIRKAKAGKKTFILHDGPPYANGSIHIGHSVNKILKDIIIKSKGMAGYDSPYIPGWDCHGLPIELKVEQIIGKPGEKFSAAEFRAECRKYAKEQIEGQKKDFIRLGILGDWERPYLTMDFKTEADIIRALSRIIANGHLLKGAKPVHWCTDCRSSLAEAEVEYYDKTSPSIDVRFNAVDAVAVCEKFGVQAPEQPVSLVIWTTTPWTLPANRAIALHAEFNYQLVQIEGECLILAADLVESVMQRAGITSWTVLGHCAGSALELLRFKHPFMGFDSPVVLGDHVTLDAGTGAVHTAPGHGPDDFVLGQKYGLEVANPVGPNGCYLPGTYPSLDGMFVFKANDVVLNILSENNALLHLEKLQHSYPCCWRHKTPIIFRATPQWFVSMDQNGLRKQSLQEIKGVQWIPGWGQARIEAMVENRPDWCISRQRTWGTPMSLFVHKETEELHPRTIELMEEVAKRVEVDGIQAWWDLEPAELLGDDAANYVKIFDTLDVWFDSGSTHASVVDARPEFQGNAADIYLEGSDQHRGWFMSSLMISTAIKGKAPYRQVLTHGFTVDGQGRKMSKSIGNTISPQDVMDKLGADILRLWVASTDYTGEIAVSDEILKRSADAYRRIRNTARFLLANLNGFDPEQHSVKPEEMAVLDRWAVGCAQAAQADIAKCYDKYDFHTVVQRMMQFCSVEMGSFYLDIIKDRQYTAKSDSLARRSCQTALYHIAEALVRWMAPILSFTADEVWNELPGKRAQYVFTEEWYGGLFGLAAGELMNDAFWADLLAVRGEVNKVLEQARADKHIRSSLEAAVTLYADNELADKLNSLGDELRFVLLTSQVVVADYEQAGEDAQQSEIGSLKIAFRKADGEKCPRCWHYAKDVGLVAEHAELCGRCVTNVAGNGEERKFA.

The 'HIGH' region motif lies at 58–68 (PYANGSIHIGH). E561 lines the L-isoleucyl-5'-AMP pocket. Residues 602–606 (KMSKS) carry the 'KMSKS' region motif. Position 605 (K605) interacts with ATP. 4 residues coordinate Zn(2+): C900, C903, C920, and C923.

The protein belongs to the class-I aminoacyl-tRNA synthetase family. IleS type 1 subfamily. In terms of assembly, monomer. It depends on Zn(2+) as a cofactor.

Its subcellular location is the cytoplasm. The enzyme catalyses tRNA(Ile) + L-isoleucine + ATP = L-isoleucyl-tRNA(Ile) + AMP + diphosphate. Functionally, catalyzes the attachment of isoleucine to tRNA(Ile). As IleRS can inadvertently accommodate and process structurally similar amino acids such as valine, to avoid such errors it has two additional distinct tRNA(Ile)-dependent editing activities. One activity is designated as 'pretransfer' editing and involves the hydrolysis of activated Val-AMP. The other activity is designated 'posttransfer' editing and involves deacylation of mischarged Val-tRNA(Ile). The polypeptide is Isoleucine--tRNA ligase (Photorhabdus laumondii subsp. laumondii (strain DSM 15139 / CIP 105565 / TT01) (Photorhabdus luminescens subsp. laumondii)).